Here is a 62-residue protein sequence, read N- to C-terminus: Beta-defensin 33 (62 aa).

The N-terminal stretch at methionine 1–glycine 20 is a signal peptide. Disulfide bonds link cysteine 30–cysteine 59, cysteine 37–cysteine 52, and cysteine 45–cysteine 60.

The protein belongs to the beta-defensin family.

It localises to the secreted. Functionally, has antibacterial activity. This chain is Beta-defensin 33 (Defb33), found in Mus musculus (Mouse).